Here is a 106-residue protein sequence, read N- to C-terminus: Class II hydrophobin 6 (106 aa).

Residues 1–16 (MQFFTVATLFLATAFA) form the signal peptide. 4 disulfide bridges follow: Cys36–Cys86, Cys47–Cys77, Cys48–Cys60, and Cys87–Cys98.

This sequence belongs to the cerato-ulmin hydrophobin family. As to quaternary structure, homodimer. Homodimers further self-assemble to form highly ordered films at water-air interfaces through intermolecular interactions.

Its subcellular location is the secreted. The protein resides in the cell wall. In terms of biological role, aerial growth, conidiation, and dispersal of filamentous fungi in the environment rely upon a capability of their secreting small amphipathic proteins called hydrophobins (HPBs) with low sequence identity. Class I can self-assemble into an outermost layer of rodlet bundles on aerial cell surfaces, conferring cellular hydrophobicity that supports fungal growth, development and dispersal; whereas Class II form highly ordered films at water-air interfaces through intermolecular interactions but contribute nothing to the rodlet structure. HFB2-6 is a class II hydrophobin that has a function in root colonization. Acts as an effector in poplar by up-regulating the expression of genes related to both the jasmonic acid and salicylic acid signal transduction pathways, which not only causes induced systemic resistance (ISR), but also systemic acquired resistance (SAR), giving poplar broad-spectrum resistance to pathogens. Also induces genes related to auxin signal transduction to promote poplar growth. Plays roles in interactions with both biotic and abiotic environmental conditions such as the presence of the pathogen Alternaria alternata or nutrient starvation conditions. The polypeptide is Class II hydrophobin 6 (Trichoderma asperellum (strain ATCC 204424 / CBS 433.97 / NBRC 101777)).